The following is a 506-amino-acid chain: Protein MGF 505-9R (506 aa).

3 ANK repeats span residues 54–83, 253–283, and 313–343; these read SIHKALQIAASEGNEDIVKLLILWNGNLKY, QVDTVLFQAVKYNHRKILAHFIHHVPREIVE, and FVKKLLHAVVKHKFMLIIKLLLERPKKKINL.

This sequence belongs to the asfivirus MGF 505 family.

Its function is as follows. Plays a role in virus cell tropism, and may be required for efficient virus replication in macrophages. The chain is Protein MGF 505-9R from African swine fever virus (isolate Tick/Malawi/Lil 20-1/1983) (ASFV).